Here is a 91-residue protein sequence, read N- to C-terminus: Probable Fe(2+)-trafficking protein (91 aa).

The protein belongs to the Fe(2+)-trafficking protein family.

Functionally, could be a mediator in iron transactions between iron acquisition and iron-requiring processes, such as synthesis and/or repair of Fe-S clusters in biosynthetic enzymes. In Paraburkholderia phytofirmans (strain DSM 17436 / LMG 22146 / PsJN) (Burkholderia phytofirmans), this protein is Probable Fe(2+)-trafficking protein.